Here is a 119-residue protein sequence, read N- to C-terminus: Basic phospholipase A2 (119 aa).

7 disulfide bridges follow: C11–C72, C27–C118, C29–C45, C44–C100, C51–C93, C61–C86, and C79–C91. Ca(2+) is bound by residues Y28, G30, and G32. The active site involves H48. D49 contributes to the Ca(2+) binding site. N82 carries an N-linked (GlcNAc...) asparagine glycan. D94 is an active-site residue.

It belongs to the phospholipase A2 family. Group I subfamily. D49 sub-subfamily. Requires Ca(2+) as cofactor. Expressed by the venom gland.

The protein resides in the secreted. The enzyme catalyses a 1,2-diacyl-sn-glycero-3-phosphocholine + H2O = a 1-acyl-sn-glycero-3-phosphocholine + a fatty acid + H(+). Functionally, snake venom phospholipase A2 (PLA2) that shows weak myotoxicity and induces edema in mice. Shows no cytotoxicity in vitro. Has an anticoagulant effect in vitro. PLA2 catalyzes the calcium-dependent hydrolysis of the 2-acyl groups in 3-sn-phosphoglycerides. This is Basic phospholipase A2 from Micrurus mipartitus (Red-tailed coral snake).